Reading from the N-terminus, the 661-residue chain is DNA cross-link repair protein PSO2/SNM1 (661 aa).

Residues 1–44 (MSRKSIVQIRRSEVKRKRSSTASSTSEGKTLHKNTHTSSKRQRT) are disordered. Positions 31 to 43 (LHKNTHTSSKRQR) are enriched in basic residues. The segment at 144–174 (VIQCPICLENLSHLELYERETHCDTCIGSDP) adopts a UBZ4-type zinc-finger fold. Zn(2+)-binding residues include Cys-147, Cys-150, His-165, and Cys-169.

This sequence belongs to the DNA repair metallo-beta-lactamase (DRMBL) family.

It is found in the nucleus. Its function is as follows. Required for DNA interstrand cross-link repair. This requires cleavage of cross-linked DNA to generate DNA double strand breaks (DSBs). This protein has 5' exonuclease activity on single-stranded and double-stranded DNA, which appears to be necessary for the processing of DNA double strand breaks prior to ligation. The sequence is that of DNA cross-link repair protein PSO2/SNM1 (PSO2) from Saccharomyces cerevisiae (strain ATCC 204508 / S288c) (Baker's yeast).